The chain runs to 515 residues: Hyccin (515 aa).

Residues 358–378 (STSQSALSNSSNTSSKNLLGK) are compositionally biased toward low complexity. Disordered regions lie at residues 358-410 (STSQ…TQRA) and 491-515 (TDLP…LSTD). The span at 389–403 (AGREKEGETCREHLS) shows a compositional bias: basic and acidic residues. Over residues 498-515 (KQPNQQRPPSISITLSTD) the composition is skewed to polar residues.

It belongs to the Hyccin family. As to quaternary structure, component of a phosphatidylinositol 4-kinase (PI4K) complex.

It localises to the cytoplasm. It is found in the cytosol. The protein resides in the cell membrane. Functionally, component of a complex required to localize phosphatidylinositol 4-kinase (PI4K) to the plasma membrane. The complex acts as a regulator of phosphatidylinositol 4-phosphate (PtdIns(4)P) synthesis. The polypeptide is Hyccin (HYCC1) (Gallus gallus (Chicken)).